The sequence spans 228 residues: Lipoprotein-releasing system ATP-binding protein LolD (228 aa).

Residues 6 to 228 (LRLSGIEKTY…LSDGRLSAES (223 aa)) enclose the ABC transporter domain. 43–50 (APSGAGKS) contributes to the ATP binding site.

This sequence belongs to the ABC transporter superfamily. Lipoprotein translocase (TC 3.A.1.125) family. The complex is composed of two ATP-binding proteins (LolD) and two transmembrane proteins (LolC and LolE).

The protein resides in the cell inner membrane. Functionally, part of the ABC transporter complex LolCDE involved in the translocation of mature outer membrane-directed lipoproteins, from the inner membrane to the periplasmic chaperone, LolA. Responsible for the formation of the LolA-lipoprotein complex in an ATP-dependent manner. This chain is Lipoprotein-releasing system ATP-binding protein LolD, found in Ruegeria pomeroyi (strain ATCC 700808 / DSM 15171 / DSS-3) (Silicibacter pomeroyi).